The sequence spans 568 residues: MFS-type efflux transporter phmH (568 aa).

Over residues 1 to 11 the composition is skewed to polar residues; the sequence is MVSGTDTTEVG. Residues 1–39 are disordered; sequence MVSGTDTTEVGATTKAPPSEGTEGILDDHSSNSQPQAEK. The next 7 membrane-spanning stretches (helical) occupy residues 45 to 65, 101 to 121, 134 to 154, 161 to 181, 199 to 219, 237 to 257, and 268 to 288; these read YPLS…VSAL, YVMI…GGSS, GIGA…LVPM, IGLL…VGGI, IFYI…LFLH, VIGN…LTYG, and IAAP…WEMS. N-linked (GlcNAc...) asparagine glycosylation occurs at Asn303. 6 consecutive transmembrane segments (helical) span residues 307 to 327, 344 to 364, 372 to 392, 399 to 419, 437 to 457, and 515 to 535; these read AAAF…NFFY, VYTL…GAIV, TVHL…SILD, EWVI…STTL, TWSF…AAIF, and IGIV…EIHL. An N-linked (GlcNAc...) asparagine glycan is attached at Asn563.

The protein belongs to the major facilitator superfamily.

The protein resides in the cell membrane. Its function is as follows. MFS-type efflux transporter; part of the gene cluster that mediates the biosynthesis of thethe mycotoxins phomacins, leucine-derived cytochalasans with potent actin polymerization-inhibitory activities and monocot-specific antigerminative activities. PhmH might be involved in the excretion of phomacins. This chain is MFS-type efflux transporter phmH, found in Phaeosphaeria nodorum (strain SN15 / ATCC MYA-4574 / FGSC 10173) (Glume blotch fungus).